We begin with the raw amino-acid sequence, 383 residues long: 8-amino-7-oxononanoate synthase (383 aa).

Arg21 lines the substrate pocket. 108–109 (GF) serves as a coordination point for pyridoxal 5'-phosphate. His133 serves as a coordination point for substrate. Ser179, His207, and Thr233 together coordinate pyridoxal 5'-phosphate. Lys236 carries the N6-(pyridoxal phosphate)lysine modification. Thr350 provides a ligand contact to substrate.

The protein belongs to the class-II pyridoxal-phosphate-dependent aminotransferase family. BioF subfamily. As to quaternary structure, homodimer. The cofactor is pyridoxal 5'-phosphate.

It carries out the reaction 6-carboxyhexanoyl-[ACP] + L-alanine + H(+) = (8S)-8-amino-7-oxononanoate + holo-[ACP] + CO2. It functions in the pathway cofactor biosynthesis; biotin biosynthesis. Its function is as follows. Catalyzes the decarboxylative condensation of pimeloyl-[acyl-carrier protein] and L-alanine to produce 8-amino-7-oxononanoate (AON), [acyl-carrier protein], and carbon dioxide. In Yersinia enterocolitica serotype O:8 / biotype 1B (strain NCTC 13174 / 8081), this protein is 8-amino-7-oxononanoate synthase.